A 997-amino-acid chain; its full sequence is Protein argonaute 5 (997 aa).

Gly residues-rich tracts occupy residues 1–16 and 43–59; these read MSNRGGGGHGGASRGR and GGRGGSVSAGRGRGNVG. The segment at 1–144 is disordered; sequence MSNRGGGGHG…TSLPPASSKA (144 aa). Positions 93–106 are enriched in low complexity; it reads SVASSSKTVSVASS. Residues 116-129 are compositionally biased toward polar residues; the sequence is VSETMSNLQITSTE. The 112-residue stretch at 360–471 folds into the PAZ domain; it reads VVTDFISKFL…LPMELCQIDE (112 aa). The Piwi domain maps to 638 to 958; that stretch reads LLIVILPDVT…AAFRARYYME (321 aa). D721 and D807 together coordinate a divalent metal cation. Interaction with guide RNA stretches follow at residues 847–848, 893–901, and 930–952; these read KR, HAGIQGTSR, and YARCTKSVSIVPPAYYAHLAAFR. Residue H947 participates in a divalent metal cation binding.

This sequence belongs to the argonaute family. Ago subfamily. Mg(2+) serves as cofactor. The cofactor is Mn(2+).

Involved in RNA-mediated post-transcriptional gene silencing (PTGS). Main component of the RNA-induced silencing complex (RISC) that binds to a short guide RNA such as a microRNA (miRNA) or small interfering RNA (siRNA). RISC uses the mature miRNA or siRNA as a guide for slicer-directed cleavage of homologous mRNAs to repress gene expression. Associates with siRNAs of various sizes, from 21-24 nucleotide in length and preferentially recruits small RNAs with a 5' terminal cytosine. Probably involved in antiviral RNA silencing. Associates with siRNAs derived from cucumber mosaic virus (CMV). Targeted by the turnip yellows virus (TuYV) protein P0 (via F-box-like domain) for probable proteasome degradation and thereby inactivating AGO5 function in RNA silencing. This is Protein argonaute 5 (AGO5) from Arabidopsis thaliana (Mouse-ear cress).